A 452-amino-acid polypeptide reads, in one-letter code: Exodeoxyribonuclease 7 large subunit (452 aa).

This sequence belongs to the XseA family. As to quaternary structure, heterooligomer composed of large and small subunits.

The protein localises to the cytoplasm. It catalyses the reaction Exonucleolytic cleavage in either 5'- to 3'- or 3'- to 5'-direction to yield nucleoside 5'-phosphates.. In terms of biological role, bidirectionally degrades single-stranded DNA into large acid-insoluble oligonucleotides, which are then degraded further into small acid-soluble oligonucleotides. The polypeptide is Exodeoxyribonuclease 7 large subunit (Bacillus cereus (strain G9842)).